We begin with the raw amino-acid sequence, 360 residues long: MNAPVGGIWLWLPLLLTWLSPEVSSSWWYMKATGGSSRVMCDNVPGLVSRQRQLCHRHPDVMRAIGLGVAEWTAECQHQFRQHRWNCNTLDRDHSLFGRVLLRSSRESAFVYAISSAGVVFAVTRACSQGELKSCSCDPKKKGTAKDSKGTFDWGGCSDNIDYGIKFARAFVDAKERKGKDARALMNVHNNRAGRKAVKRFLKQECKCHGVSGSCTLRTCWLAMADFRKTGDYLWRRYNGAIQVVMNQDGTGFTVANKRFKKPTKNDLVYFENSPDYCIRDRDAGSLGTAGRVCNLTSRGMDSCEVMCCGRGYDTSRVTRMTKCECKFHWCCAVRCQDCLEALDVHTCKAPKSADWAAPT.

The first 25 residues, 1–25 (MNAPVGGIWLWLPLLLTWLSPEVSS), serve as a signal peptide directing secretion. Cystine bridges form between Cys76–Cys87, Cys127–Cys135, Cys137–Cys157, Cys206–Cys220, Cys208–Cys215, Cys278–Cys309, Cys294–Cys304, Cys308–Cys348, Cys324–Cys339, Cys326–Cys336, and Cys331–Cys332. Residue Ser212 is the site of O-palmitoleoyl serine; by PORCN attachment. The N-linked (GlcNAc...) asparagine glycan is linked to Asn295.

This sequence belongs to the Wnt family. In terms of processing, palmitoleoylation is required for efficient binding to frizzled receptors. Depalmitoleoylation leads to Wnt signaling pathway inhibition.

Its subcellular location is the secreted. The protein localises to the extracellular space. The protein resides in the extracellular matrix. Its function is as follows. Ligand for members of the frizzled family of seven transmembrane receptors. Probable developmental protein. May be a signaling molecule which affects the development of discrete regions of tissues. Is likely to signal over only few cell diameters. The protein is Protein Wnt-2 (WNT2) of Rhinolophus ferrumequinum (Greater horseshoe bat).